Reading from the N-terminus, the 193-residue chain is MTDYFLLFVGTVLVNNFVLVKFLGLCPFMGVSKKLETAIGMGFATTFVMTLASVCSWLVNTFILLPLDLIYLRTLSFILVIAVVVQFTELVVRKTSPTLYRLLGIFLPLITTNCAVLGVALLNINQSHDFLQSAIYGFGAAAGFSLVMVLFAAIRERLAVADVPAPFKGSSIGLITAGLMSLAFMGFSGLVKF.

Helical transmembrane passes span 5-25 (FLLF…FLGL), 39-59 (IGMG…SWLV), 62-82 (FILL…LVIA), 102-122 (LLGI…VALL), 134-154 (AIYG…FAAI), and 171-191 (SIGL…SGLV).

Belongs to the NqrDE/RnfAE family. The complex is composed of six subunits: RnfA, RnfB, RnfC, RnfD, RnfE and RnfG.

The protein resides in the cell inner membrane. Functionally, part of a membrane-bound complex that couples electron transfer with translocation of ions across the membrane. In Photorhabdus laumondii subsp. laumondii (strain DSM 15139 / CIP 105565 / TT01) (Photorhabdus luminescens subsp. laumondii), this protein is Ion-translocating oxidoreductase complex subunit A.